Consider the following 585-residue polypeptide: Mycosin-5 (585 aa).

The N-terminal stretch at 1–39 (MQRFGTGSSRSWCGRAGTATIAAVLLASGALTGLPPAYA) is a signal peptide. One can recognise a Peptidase S8 domain in the interval 83-521 (PKYMEMLNLN…YGVVDPVAAL (439 aa)). Residues Asp-109 and His-141 each act as charge relay system in the active site. Over residues 163–173 (VPRRPVTIPTT) the composition is skewed to low complexity. The tract at residues 163–269 (VPRRPVTIPT…PALGPPPDAF (107 aa)) is disordered. Pro residues-rich tracts occupy residues 196–224 (PAPP…PQPP) and 252–267 (NPHP…PPPD). Ser-466 functions as the Charge relay system in the catalytic mechanism. The helical transmembrane segment at 552-572 (VPIWVAAGGLAGALLIGGAVF) threads the bilayer.

Belongs to the peptidase S8 family.

It is found in the cell membrane. The chain is Mycosin-5 from Mycobacterium tuberculosis (strain ATCC 25618 / H37Rv).